The following is a 368-amino-acid chain: Putative flavoprotein monooxygenase (368 aa).

Residues alanine 14, glutamate 34, serine 41, 52–53 (IT), valine 110, alanine 307, and isoleucine 319 contribute to the FAD site.

FAD is required as a cofactor.

FAD-binding protein that may have monooxygenase activity using NADPH and/or NADH as an electron donor. The protein is Putative flavoprotein monooxygenase of Staphylococcus aureus (strain Mu50 / ATCC 700699).